A 105-amino-acid chain; its full sequence is Large ribosomal subunit protein uL24 (105 aa).

The interval 75 to 105 (DSDGNPTRVGYRTDEESGKRVRISRKNGKDI) is disordered. A compositionally biased stretch (basic residues) spans 94–105 (RVRISRKNGKDI).

The protein belongs to the universal ribosomal protein uL24 family. As to quaternary structure, part of the 50S ribosomal subunit.

Functionally, one of two assembly initiator proteins, it binds directly to the 5'-end of the 23S rRNA, where it nucleates assembly of the 50S subunit. One of the proteins that surrounds the polypeptide exit tunnel on the outside of the subunit. This chain is Large ribosomal subunit protein uL24, found in Rhodococcus jostii (strain RHA1).